Here is a 721-residue protein sequence, read N- to C-terminus: Ribonucleoside-diphosphate reductase subunit alpha (721 aa).

Substrate is bound by residues T168, 184-185 (SC), G213, 393-397 (NLCSE), and 595-599 (PTGSI). The cysteines at positions 185 and 422 are disulfide-linked. Residue N393 is the Proton acceptor of the active site. C395 (cysteine radical intermediate) is an active-site residue. E397 acts as the Proton acceptor in catalysis.

The protein belongs to the ribonucleoside diphosphate reductase large chain family. In terms of assembly, tetramer of two alpha and two beta subunits.

The catalysed reaction is a 2'-deoxyribonucleoside 5'-diphosphate + [thioredoxin]-disulfide + H2O = a ribonucleoside 5'-diphosphate + [thioredoxin]-dithiol. Its activity is regulated as follows. Under complex allosteric control mediated by deoxynucleoside triphosphates and ATP binding. The type of nucleotide bound at the specificity site determines substrate preference. It seems probable that ATP makes the enzyme reduce CDP and UDP, dGTP favors ADP reduction and dTTP favors GDP reduction. Provides the precursors necessary for DNA synthesis. Catalyzes the biosynthesis of deoxyribonucleotides from the corresponding ribonucleotides. The protein is Ribonucleoside-diphosphate reductase subunit alpha (nrdE) of Mycobacterium leprae (strain TN).